Here is a 533-residue protein sequence, read N- to C-terminus: Tyrosine decarboxylase (533 aa).

A disordered region spans residues 1 to 22; the sequence is MAPPSHCHTINGGAPRNGAIPE. Positions 281 and 336 each coordinate pyridoxal 5'-phosphate. Lysine 339 carries the N6-(pyridoxal phosphate)lysine modification.

This sequence belongs to the group II decarboxylase family. Pyridoxal 5'-phosphate is required as a cofactor.

The enzyme catalyses L-tyrosine + H(+) = tyramine + CO2. Functionally, catalyzes the decarboxylation of L-tyrosine to tyramine, which can be converted to the hydroxycinnamic acid amides feruloyltyramine and 4-coumaroyltyramine. Possesses low tryptophan decarboxylase activity. The polypeptide is Tyrosine decarboxylase (Oryza sativa subsp. japonica (Rice)).